We begin with the raw amino-acid sequence, 710 residues long: Ferrioxamine receptor (710 aa).

The signal sequence occupies residues 1–26 (MFSAFIIKRSAILCSLAMFIPLASIA). Residues 28–35 (DTIEVTAK) carry the TonB box motif. Beta stranded transmembrane passes span 29–37 (TIEVTAKAG), 65–73 (TAQSVSVVT), 91–99 (YTPGVFTGF), 106–114 (YDTVALRGF), 137–145 (NVLQVDPWF), 152–160 (IKGPSSALY), 180–188 (SEGHFRLTA), 194–202 (QVAAFDYTD), 208–216 (WAFRLTGIT), 259–267 (GGYHSAVPA), 271–279 (IYGQKLSRG), 293–301 (WQQIYSYEF), 309–317 (WSFRQNASY), 353–361 (FAVDNQLEA), 370–378 (HKVLLGVDF), 427–435 (YEQSGVYLQ), 443–451 (WHLNLSGRY), 476–484 (GRASLLYSF), 491–499 (YVSYSQAIT), 517–525 (EQYEVGIIY), 531–539 (TSLYSAALY), 555–563 (YYVPAGKVN), 567–575 (LELEARSQI), 579–587 (LSVIAGYTY), 610–618 (NMASLWAQY), 624–632 (INVGAGIRY), 649–657 (YTLGDASVR), 671–679 (FVQLNVNNI), 684–692 (YVAACYSTS), and 702–710 (VQATVGYDF). Residues 61-174 (PLILTAQSVS…PGGVVMMTSK (114 aa)) form the TBDR plug domain. Residues 181–710 (EGHFRLTAGN…SVQATVGYDF (530 aa)) form the TBDR beta-barrel domain. The TonB C-terminal box motif lies at 693–710 (YCYWGAERSVQATVGYDF).

Belongs to the TonB-dependent receptor family.

It is found in the cell outer membrane. Its function is as follows. Ferrioxamine binding and uptake, in association with the TonB protein. This Yersinia enterocolitica protein is Ferrioxamine receptor (foxA).